Here is a 543-residue protein sequence, read N- to C-terminus: CTP synthase (543 aa).

The interval 1–270 (MNNLTSTKFI…DTQILKHFNI (270 aa)) is amidoligase domain. Ser18 contacts CTP. Ser18 contacts UTP. ATP is bound by residues 19-24 (SLGKGL) and Asp76. Mg(2+)-binding residues include Asp76 and Glu144. Residues 151-153 (DIE), 191-196 (KTKPTQ), and Lys227 contribute to the CTP site. Residues 191–196 (KTKPTQ) and Lys227 contribute to the UTP site. One can recognise a Glutamine amidotransferase type-1 domain in the interval 295–537 (TIAIIGKYIK…IQASLNYQET (243 aa)). L-glutamine is bound at residue Gly356. Cys383 functions as the Nucleophile; for glutamine hydrolysis in the catalytic mechanism. Residues 384 to 387 (MGMQ), Glu407, and Arg462 each bind L-glutamine. Active-site residues include His510 and Glu512.

This sequence belongs to the CTP synthase family. In terms of assembly, homotetramer.

It carries out the reaction UTP + L-glutamine + ATP + H2O = CTP + L-glutamate + ADP + phosphate + 2 H(+). It catalyses the reaction L-glutamine + H2O = L-glutamate + NH4(+). The catalysed reaction is UTP + NH4(+) + ATP = CTP + ADP + phosphate + 2 H(+). The protein operates within pyrimidine metabolism; CTP biosynthesis via de novo pathway; CTP from UDP: step 2/2. With respect to regulation, allosterically activated by GTP, when glutamine is the substrate; GTP has no effect on the reaction when ammonia is the substrate. The allosteric effector GTP functions by stabilizing the protein conformation that binds the tetrahedral intermediate(s) formed during glutamine hydrolysis. Inhibited by the product CTP, via allosteric rather than competitive inhibition. Functionally, catalyzes the ATP-dependent amination of UTP to CTP with either L-glutamine or ammonia as the source of nitrogen. Regulates intracellular CTP levels through interactions with the four ribonucleotide triphosphates. This Ehrlichia ruminantium (strain Gardel) protein is CTP synthase.